The chain runs to 932 residues: Protocadherin gamma-A3 (932 aa).

An N-terminal signal peptide occupies residues 1-29 (MTNCLSFRNGRGLALLCALLGTLCETGSG). Cadherin domains follow at residues 30-133 (QIRY…APNF), 134-242 (PTEE…PPMF), 243-347 (TQPE…APEI), 348-452 (TITS…PPTF), 453-562 (PHLS…APEI), and 570-682 (DGST…EPSA). Topologically, residues 30-692 (QIRYSVSEEL…KPNDSDLTLY (663 aa)) are extracellular. N265, N419, and N545 each carry an N-linked (GlcNAc...) asparagine glycan. An N-linked (GlcNAc...) asparagine glycan is attached at N685. The chain crosses the membrane as a helical span at residues 693–713 (LVVAVAAVSCVFLAFVIVLLA). Residues 714–932 (LRLRRWHKSR…KKKSGKKEKK (219 aa)) lie on the Cytoplasmic side of the membrane. Disordered stretches follow at residues 805–841 (NLLQQAPPNTDWRFSQAQRPGTSGSQNGDDTGTWPNN) and 902–932 (ATLTNAAGKRDGKAPAGGNGNKKKSGKKEKK). Basic residues predominate over residues 922–932 (NKKKSGKKEKK).

The protein resides in the cell membrane. In terms of biological role, potential calcium-dependent cell-adhesion protein. May be involved in the establishment and maintenance of specific neuronal connections in the brain. The polypeptide is Protocadherin gamma-A3 (PCDHGA3) (Homo sapiens (Human)).